The sequence spans 498 residues: Pentatricopeptide repeat-containing protein At2g15980 (498 aa).

PPR repeat units follow at residues 244-274 (NATT…MEEE), 280-314 (NVYS…GVVY), 315-349 (DIVA…GIEC), 350-384 (TCLT…GFEA), 385-423 (DGLT…MFYP), 424-458 (SRNC…GFKP), and 459-489 (SQET…MAES).

It belongs to the PPR family. P subfamily.

The polypeptide is Pentatricopeptide repeat-containing protein At2g15980 (Arabidopsis thaliana (Mouse-ear cress)).